We begin with the raw amino-acid sequence, 326 residues long: N-acetyl-gamma-glutamyl-phosphate reductase (326 aa).

C155 is an active-site residue.

The protein belongs to the NAGSA dehydrogenase family. Type 1 subfamily.

It localises to the cytoplasm. The enzyme catalyses N-acetyl-L-glutamate 5-semialdehyde + phosphate + NADP(+) = N-acetyl-L-glutamyl 5-phosphate + NADPH + H(+). It participates in amino-acid biosynthesis; L-arginine biosynthesis; N(2)-acetyl-L-ornithine from L-glutamate: step 3/4. Catalyzes the NADPH-dependent reduction of N-acetyl-5-glutamyl phosphate to yield N-acetyl-L-glutamate 5-semialdehyde. This chain is N-acetyl-gamma-glutamyl-phosphate reductase, found in Shewanella baltica (strain OS155 / ATCC BAA-1091).